Consider the following 163-residue polypeptide: Staphylokinase (163 aa).

A signal peptide spans 1-27 (MLKRGLLFLTVLLLLFSFSSITNEVSA).

It belongs to the staphylokinase family.

The protein localises to the secreted. Functionally, potent plasminogen activator that converts plasminogen into plasmin. It forms a 1:1 complex with plasmin, which in turn activates other plasminogen molecules. This Staphylococcus aureus (strain MRSA252) protein is Staphylokinase (sak).